We begin with the raw amino-acid sequence, 429 residues long: Trigger factor (429 aa).

Residues D162 to P247 form the PPIase FKBP-type domain.

Belongs to the FKBP-type PPIase family. Tig subfamily.

It is found in the cytoplasm. It catalyses the reaction [protein]-peptidylproline (omega=180) = [protein]-peptidylproline (omega=0). Functionally, involved in protein export. Acts as a chaperone by maintaining the newly synthesized protein in an open conformation. Functions as a peptidyl-prolyl cis-trans isomerase. This Fusobacterium nucleatum subsp. nucleatum (strain ATCC 25586 / DSM 15643 / BCRC 10681 / CIP 101130 / JCM 8532 / KCTC 2640 / LMG 13131 / VPI 4355) protein is Trigger factor.